The following is a 205-amino-acid chain: Large ribosomal subunit protein uL4 (205 aa).

Positions 54–78 (GDISGTTAKPHRQKHTGRARQGSLR) are disordered. Basic residues predominate over residues 62-71 (KPHRQKHTGR).

Belongs to the universal ribosomal protein uL4 family. In terms of assembly, part of the 50S ribosomal subunit.

Functionally, one of the primary rRNA binding proteins, this protein initially binds near the 5'-end of the 23S rRNA. It is important during the early stages of 50S assembly. It makes multiple contacts with different domains of the 23S rRNA in the assembled 50S subunit and ribosome. Its function is as follows. Forms part of the polypeptide exit tunnel. The sequence is that of Large ribosomal subunit protein uL4 from Ehrlichia chaffeensis (strain ATCC CRL-10679 / Arkansas).